Reading from the N-terminus, the 201-residue chain is Thymidylate kinase (201 aa).

7 to 14 (GGEGSGKT) provides a ligand contact to ATP.

The protein belongs to the thymidylate kinase family.

It carries out the reaction dTMP + ATP = dTDP + ADP. Its function is as follows. Phosphorylation of dTMP to form dTDP in both de novo and salvage pathways of dTTP synthesis. This is Thymidylate kinase from Acholeplasma laidlawii (strain PG-8A).